The chain runs to 282 residues: N-methyltransferase gliN (282 aa).

It belongs to the methyltransferase superfamily. LaeA methyltransferase family.

It functions in the pathway mycotoxin biosynthesis. Its function is as follows. N-methyltransferase; part of the gene cluster that mediates the biosynthesis of gliotoxin, a member of the epipolythiodioxopiperazine (ETP) class of toxins characterized by a disulfide bridged cyclic dipeptide. The first step in gliotoxin biosynthesis is the condensation of serine and phenylalanine to form the cyclo-L-phenylalanyl-L-serine diketopiperazine (DKP) by the NRPS gliP. GliP is also able to produce the DKP cyclo-L-tryptophanyl-L-serine, suggesting that the substrate specificity of the first adenylation (A) domain in gliP is sufficiently relaxed to accommodate both L-Phe and L-Trp. The cytochrome P450 monooxygenase gliC has been shown to catalyze the subsequent hydroxylation of the alpha-carbon of L-Phe in cyclo-L-phenylalanyl-L-serine whereas the second cytochrome P450 enzyme, gliF, is presumably involved in the modification of the DKP side chain. The glutathione S-transferase (GST) gliG then forms a bis-glutathionylated biosynthetic intermediate which is responsible for the sulfurization of gliotoxin. This bis-glutathionylated intermediate is subsequently processed by the gamma-glutamyl cyclotransferase gliK to remove both gamma-glutamyl moieties. Subsequent processing via gliI yields a biosynthetic intermediate, which is N-methylated via the N-methyltransferase gliN, before the gliotoxin oxidoreductase gliT-mediated disulfide bridge closure. GliN-mediated amide methylation confers stability to ETP, damping the spontaneous formation of tri- and tetrasulfides. Intracellular dithiol gliotoxin oxidized by gliT is subsequently effluxed by gliA. Gliotoxin contributes to pathogenesis during invasive aspergillosis. In macrophages and neutrophils, gliotoxin showed inhibition of various different cell functions including cytokine production, antigen presentation, phagocytosis, and production of reactive oxygen species. The polypeptide is N-methyltransferase gliN (Aspergillus fumigatus (strain ATCC MYA-4609 / CBS 101355 / FGSC A1100 / Af293) (Neosartorya fumigata)).